We begin with the raw amino-acid sequence, 83 residues long: Cytochrome b559 subunit alpha (83 aa).

A helical membrane pass occupies residues 21 to 35 (VIHSITIPSLFIAGW). His23 lines the heme pocket.

Belongs to the PsbE/PsbF family. In terms of assembly, heterodimer of an alpha subunit and a beta subunit. PSII is composed of 1 copy each of membrane proteins PsbA, PsbB, PsbC, PsbD, PsbE, PsbF, PsbH, PsbI, PsbJ, PsbK, PsbL, PsbM, PsbT, PsbX, PsbY, PsbZ, Psb30/Ycf12, at least 3 peripheral proteins of the oxygen-evolving complex and a large number of cofactors. It forms dimeric complexes. It depends on heme b as a cofactor.

The protein localises to the plastid. It is found in the chloroplast thylakoid membrane. This b-type cytochrome is tightly associated with the reaction center of photosystem II (PSII). PSII is a light-driven water:plastoquinone oxidoreductase that uses light energy to abstract electrons from H(2)O, generating O(2) and a proton gradient subsequently used for ATP formation. It consists of a core antenna complex that captures photons, and an electron transfer chain that converts photonic excitation into a charge separation. The polypeptide is Cytochrome b559 subunit alpha (Phalaenopsis aphrodite subsp. formosana (Moth orchid)).